Reading from the N-terminus, the 82-residue chain is Small ribosomal subunit protein uS17 (82 aa).

Belongs to the universal ribosomal protein uS17 family. In terms of assembly, part of the 30S ribosomal subunit.

Its function is as follows. One of the primary rRNA binding proteins, it binds specifically to the 5'-end of 16S ribosomal RNA. This chain is Small ribosomal subunit protein uS17, found in Aeromonas hydrophila subsp. hydrophila (strain ATCC 7966 / DSM 30187 / BCRC 13018 / CCUG 14551 / JCM 1027 / KCTC 2358 / NCIMB 9240 / NCTC 8049).